Consider the following 504-residue polypeptide: Maturase K (504 aa).

Belongs to the intron maturase 2 family. MatK subfamily.

The protein localises to the plastid. It localises to the chloroplast. Its function is as follows. Usually encoded in the trnK tRNA gene intron. Probably assists in splicing its own and other chloroplast group II introns. This is Maturase K from Quercus coccifera (Kermes oak).